Reading from the N-terminus, the 92-residue chain is UPF0213 protein H16_B0156 (92 aa).

The region spanning 5 to 80 (SAWYLYLLEC…KRLSSTQKRA (76 aa)) is the GIY-YIG domain.

Belongs to the UPF0213 family.

In Cupriavidus necator (strain ATCC 17699 / DSM 428 / KCTC 22496 / NCIMB 10442 / H16 / Stanier 337) (Ralstonia eutropha), this protein is UPF0213 protein H16_B0156.